Consider the following 120-residue polypeptide: NAD(P)H-quinone oxidoreductase subunit 3, chloroplastic (120 aa).

Helical transmembrane passes span isoleucine 9–glycine 29, methionine 64–methionine 84, and valine 88–leucine 108.

It belongs to the complex I subunit 3 family. NDH is composed of at least 16 different subunits, 5 of which are encoded in the nucleus.

The protein resides in the plastid. It is found in the chloroplast thylakoid membrane. The catalysed reaction is a plastoquinone + NADH + (n+1) H(+)(in) = a plastoquinol + NAD(+) + n H(+)(out). The enzyme catalyses a plastoquinone + NADPH + (n+1) H(+)(in) = a plastoquinol + NADP(+) + n H(+)(out). NDH shuttles electrons from NAD(P)H:plastoquinone, via FMN and iron-sulfur (Fe-S) centers, to quinones in the photosynthetic chain and possibly in a chloroplast respiratory chain. The immediate electron acceptor for the enzyme in this species is believed to be plastoquinone. Couples the redox reaction to proton translocation, and thus conserves the redox energy in a proton gradient. The chain is NAD(P)H-quinone oxidoreductase subunit 3, chloroplastic from Populus alba (White poplar).